We begin with the raw amino-acid sequence, 205 residues long: Endoribonuclease YbeY (205 aa).

Zn(2+)-binding residues include His-124, His-128, and His-134. Positions 162–205 (GTAPVAPGGEAQVPNEALETSGKRQDHSLGEILPGGMSRRLAGS) are disordered.

The protein belongs to the endoribonuclease YbeY family. Zn(2+) serves as cofactor.

It localises to the cytoplasm. In terms of biological role, single strand-specific metallo-endoribonuclease involved in late-stage 70S ribosome quality control and in maturation of the 3' terminus of the 16S rRNA. In Beijerinckia indica subsp. indica (strain ATCC 9039 / DSM 1715 / NCIMB 8712), this protein is Endoribonuclease YbeY.